Consider the following 428-residue polypeptide: Glutamate-1-semialdehyde 2,1-aminomutase (428 aa).

Lys267 is modified (N6-(pyridoxal phosphate)lysine).

Belongs to the class-III pyridoxal-phosphate-dependent aminotransferase family. HemL subfamily. In terms of assembly, homodimer. The cofactor is pyridoxal 5'-phosphate.

It is found in the cytoplasm. The enzyme catalyses (S)-4-amino-5-oxopentanoate = 5-aminolevulinate. It participates in porphyrin-containing compound metabolism; protoporphyrin-IX biosynthesis; 5-aminolevulinate from L-glutamyl-tRNA(Glu): step 2/2. The protein operates within porphyrin-containing compound metabolism; chlorophyll biosynthesis. This Prochlorococcus marinus (strain NATL1A) protein is Glutamate-1-semialdehyde 2,1-aminomutase.